The following is a 271-amino-acid chain: N-acetyltransferase ECO1 (271 aa).

A disordered region spans residues 1-38 (MKTYRAKRKYLSESEDDVFSSSPTQSPETSPLQPPNES). Positions 20-31 (SSSPTQSPETSP) are enriched in low complexity. The segment at 80–104 (TTCKTCGMTYQVAYGPDISAHKSFH) adopts a CCHH-type zinc-finger fold.

Belongs to the acetyltransferase family. ECO subfamily.

It is found in the nucleus. Functionally, probable acetyltransferase required for the establishment of sister chromatid cohesion and couple the processes of cohesion and DNA replication to ensure that only sister chromatids become paired together. In contrast to the structural cohesins, the deposition and establishment factors are required only during S phase. Acts by acetylating the cohesin complex component SMC3. The polypeptide is N-acetyltransferase ECO1 (ECO1) (Yarrowia lipolytica (strain CLIB 122 / E 150) (Yeast)).